A 305-amino-acid chain; its full sequence is Probable aspartoacylase (305 aa).

Residues H13 and E16 each contribute to the Zn(2+) site. Residues R55 and 62–63 (NR) contribute to the substrate site. H105 is a binding site for Zn(2+). Residues E163 and Y273 each coordinate substrate.

Belongs to the AspA/AstE family. Aspartoacylase subfamily. It depends on Zn(2+) as a cofactor.

The catalysed reaction is an N-acyl-L-aspartate + H2O = a carboxylate + L-aspartate. The protein is Probable aspartoacylase of Prochlorococcus marinus (strain NATL1A).